Reading from the N-terminus, the 399-residue chain is Formate-dependent phosphoribosylglycinamide formyltransferase (399 aa).

Residues 22 to 23 (EL) and glutamate 82 contribute to the N(1)-(5-phospho-beta-D-ribosyl)glycinamide site. Residues arginine 114, lysine 155, 160 to 165 (SSGKGQ), 195 to 198 (EKMI), and glutamate 203 contribute to the ATP site. The region spanning 119–308 (RLAAETLHLL…EFALHVRAFL (190 aa)) is the ATP-grasp domain. Mg(2+)-binding residues include glutamate 267 and glutamate 279. N(1)-(5-phospho-beta-D-ribosyl)glycinamide contacts are provided by residues aspartate 286, lysine 355, and 362 to 363 (RR).

This sequence belongs to the PurK/PurT family. Homodimer.

It catalyses the reaction N(1)-(5-phospho-beta-D-ribosyl)glycinamide + formate + ATP = N(2)-formyl-N(1)-(5-phospho-beta-D-ribosyl)glycinamide + ADP + phosphate + H(+). It participates in purine metabolism; IMP biosynthesis via de novo pathway; N(2)-formyl-N(1)-(5-phospho-D-ribosyl)glycinamide from N(1)-(5-phospho-D-ribosyl)glycinamide (formate route): step 1/1. Its function is as follows. Involved in the de novo purine biosynthesis. Catalyzes the transfer of formate to 5-phospho-ribosyl-glycinamide (GAR), producing 5-phospho-ribosyl-N-formylglycinamide (FGAR). Formate is provided by PurU via hydrolysis of 10-formyl-tetrahydrofolate. This Proteus mirabilis (strain HI4320) protein is Formate-dependent phosphoribosylglycinamide formyltransferase.